We begin with the raw amino-acid sequence, 856 residues long: Beta-galactosidase 3 (856 aa).

The signal sequence occupies residues 1-31; sequence MREMGTGDSASRLILWFCLGFLILGVGFVQC. Residue Glu-189 is the Proton donor of the active site. The active-site Nucleophile is Glu-258. Residue Asn-468 is glycosylated (N-linked (GlcNAc...) asparagine). An SUEL-type lectin domain is found at 760 to 846; that stretch reads TFHRPKVHLK…KRLTVEAVCA (87 aa).

It belongs to the glycosyl hydrolase 35 family. Ubiquitous.

It is found in the secreted. It localises to the extracellular space. The protein localises to the apoplast. It catalyses the reaction Hydrolysis of terminal non-reducing beta-D-galactose residues in beta-D-galactosides.. The sequence is that of Beta-galactosidase 3 (BGAL3) from Arabidopsis thaliana (Mouse-ear cress).